The primary structure comprises 641 residues: Protein GAMETE EXPRESSED 3 (641 aa).

Positions 1–29 (MVAFRFVYIPLPFFFFFFFFFVFFSGVSQ) are cleaved as a signal peptide. The chain crosses the membrane as a helical span at residues 441–461 (IIWFLLFEFVIMVLFAALVRF). Residues 570-627 (ITIFQTPSDESSSEESYRDEHYDDVADDEHDEDDLDRKQKGKLLAHSEGSSNDGDGIA) form a disordered region. The segment covering 584 to 593 (ESYRDEHYDD) has biased composition (basic and acidic residues). Residues 594–603 (VADDEHDEDD) show a composition bias toward acidic residues.

As to expression, expressed in mature siliques and in pollen, mainly in the sperm cells. Detected in the egg cell within the female gametophyte.

The protein localises to the cell membrane. Required for micropylar pollen tube guidance. Plays a role during early embryo patterning. In Arabidopsis thaliana (Mouse-ear cress), this protein is Protein GAMETE EXPRESSED 3 (GEX3).